A 421-amino-acid chain; its full sequence is MKFTLAASGSRGDVEPFAALGLELQRRGHEVRIGVPPDMLRFVESAGLAAVAYGPDTQEFLARDTYSQWRQWWKILPPIKALQQLRQAWADMATDLKSLADGADLVMTGVVYQGVVANVAEYYGIPFGVLHFVPARVNGKIIPSLPSPLNRAILATVWRAHWLLAKKPEDAQRRELGLPKATSLSTRRIVKRGALEIQAYDELCFPGLAAEWAEYGDRRPFVGALTLELPTAADNEVLSWIAAGTPPIYFGFGSMPIVSPTDTVAMIAAACADLGERALISVKPKDLTQVPKFDHVKIVTSVSHAAVFPACRAVVHHGGAGTTAASLRAGVPTLILWIFIEQPVWAAQIKRLKVGAGRRFSATTQRSLAADLRTILAPQYATRAREVANRMSKPDESVNAAADLLEDKASRNKSRTRYQDC.

The protein belongs to the glycosyltransferase 28 family.

This is an uncharacterized protein from Mycobacterium leprae (strain TN).